The chain runs to 650 residues: Acetyl-coenzyme A synthetase (650 aa).

Residues 191 to 194 (RGGR), Thr311, and Asn335 contribute to the CoA site. ATP is bound by residues 387–389 (GEP), 411–416 (DTWWQT), Asp501, and Arg516. Ser524 serves as a coordination point for CoA. Residue Arg527 participates in ATP binding. 3 residues coordinate Mg(2+): Val538, His540, and Ile543. Residue Arg585 participates in CoA binding. Lys610 carries the post-translational modification N6-acetyllysine.

The protein belongs to the ATP-dependent AMP-binding enzyme family. Mg(2+) is required as a cofactor. In terms of processing, acetylated. Deacetylation by the SIR2-homolog deacetylase activates the enzyme.

It carries out the reaction acetate + ATP + CoA = acetyl-CoA + AMP + diphosphate. In terms of biological role, catalyzes the conversion of acetate into acetyl-CoA (AcCoA), an essential intermediate at the junction of anabolic and catabolic pathways. AcsA undergoes a two-step reaction. In the first half reaction, AcsA combines acetate with ATP to form acetyl-adenylate (AcAMP) intermediate. In the second half reaction, it can then transfer the acetyl group from AcAMP to the sulfhydryl group of CoA, forming the product AcCoA. The protein is Acetyl-coenzyme A synthetase of Vibrio vulnificus (strain CMCP6).